The sequence spans 292 residues: GTP cyclohydrolase FolE2 (292 aa).

Belongs to the GTP cyclohydrolase IV family.

It catalyses the reaction GTP + H2O = 7,8-dihydroneopterin 3'-triphosphate + formate + H(+). Its pathway is cofactor biosynthesis; 7,8-dihydroneopterin triphosphate biosynthesis; 7,8-dihydroneopterin triphosphate from GTP: step 1/1. Functionally, converts GTP to 7,8-dihydroneopterin triphosphate. The protein is GTP cyclohydrolase FolE2 of Staphylococcus epidermidis (strain ATCC 35984 / DSM 28319 / BCRC 17069 / CCUG 31568 / BM 3577 / RP62A).